A 467-amino-acid polypeptide reads, in one-letter code: Dimethylamine methyltransferase MtbB3 (467 aa).

Pyl356 is a non-standard amino acid (pyrrolysine).

This sequence belongs to the dimethylamine methyltransferase family.

It carries out the reaction Co(I)-[dimethylamine-specific corrinoid protein] + dimethylamine + H(+) = methyl-Co(III)-[dimethylamine-specific corrinoid protein] + methylamine. Its pathway is one-carbon metabolism; methanogenesis from dimethylamine. Catalyzes the transfer of a methyl group from dimethylamine to the corrinoid cofactor of MtbC. This chain is Dimethylamine methyltransferase MtbB3 (mtbB3), found in Methanosarcina mazei (strain ATCC BAA-159 / DSM 3647 / Goe1 / Go1 / JCM 11833 / OCM 88) (Methanosarcina frisia).